The following is a 111-amino-acid chain: Putative splicing factor C222.18 (111 aa).

The 78-residue stretch at 18-95 folds into the RRM domain; sequence HTLYIRNFGT…DIIFVEWAKS (78 aa).

This sequence belongs to the splicing factor SR family.

It localises to the nucleus. Functionally, has a role in pre-mRNA splicing where it is involved in spliceosome assembly. The sequence is that of Putative splicing factor C222.18 from Schizosaccharomyces pombe (strain 972 / ATCC 24843) (Fission yeast).